The primary structure comprises 89 residues: Small ribosomal subunit protein uS17 (89 aa).

It belongs to the universal ribosomal protein uS17 family. In terms of assembly, part of the 30S ribosomal subunit.

In terms of biological role, one of the primary rRNA binding proteins, it binds specifically to the 5'-end of 16S ribosomal RNA. This Variovorax paradoxus (strain S110) protein is Small ribosomal subunit protein uS17.